Reading from the N-terminus, the 640-residue chain is WW domain-binding protein 11 (640 aa).

Polar residues predominate over residues 1–11 (MGRRSTSSTKS). The tract at residues 1-37 (MGRRSTSSTKSGKFMNPTDQARKEARKRELKKNKKQR) is disordered. Residues 28 to 37 (RELKKNKKQR) are compositionally biased toward basic residues. Residues 75 to 122 (EKVLRDKRKKLRETFERIVRLYERENPETYKELRKLELEYETKRGQLS) are a coiled coil. Disordered regions lie at residues 155–174 (DIPLPGAQPPSILKKSSALG), 187–563 (VPRL…ISAK), and 582–625 (RVRR…LKTK). Over residues 194–207 (RKPPGPPPGPPPPQ) the composition is skewed to pro residues. The segment covering 230–240 (DGGRDSDSKSE) has biased composition (basic and acidic residues). Over residues 241-251 (ADEESDSQEDS) the composition is skewed to acidic residues. The span at 252–274 (SAEREDSDRGERDEERERADKHT) shows a compositional bias: basic and acidic residues. Serine 285 carries the phosphoserine modification. Over residues 315–338 (PEEEEEDEEEEYSESEDSEAEDQA) the composition is skewed to acidic residues. Over residues 356–371 (APMAAQQPPSLMQAPP) the composition is skewed to low complexity. Composition is skewed to pro residues over residues 372–412 (ITGP…PPGL) and 422–491 (RLLP…PPLN). Residues 421-432 (PRLLPPGPPPGR) carry the PGR motif. The segment covering 547–558 (GSGGASAQGGGA) has biased composition (gly residues). Basic and acidic residues predominate over residues 586–599 (DRAGGTGRREEERP). The segment covering 603 to 616 (QQTPAHQAPPIAHA) has biased composition (low complexity).

The protein resides in the cytoplasm. It is found in the nucleus. Functionally, activates pre-mRNA splicing. In Danio rerio (Zebrafish), this protein is WW domain-binding protein 11 (wbp11).